The primary structure comprises 181 residues: ATP-dependent protease subunit HslV (181 aa).

Residue Thr-5 is part of the active site. 3 residues coordinate Na(+): Ser-162, Cys-165, and Thr-168.

This sequence belongs to the peptidase T1B family. HslV subfamily. A double ring-shaped homohexamer of HslV is capped on each side by a ring-shaped HslU homohexamer. The assembly of the HslU/HslV complex is dependent on binding of ATP.

The protein resides in the cytoplasm. It carries out the reaction ATP-dependent cleavage of peptide bonds with broad specificity.. Its activity is regulated as follows. Allosterically activated by HslU binding. Functionally, protease subunit of a proteasome-like degradation complex believed to be a general protein degrading machinery. The protein is ATP-dependent protease subunit HslV of Campylobacter hominis (strain ATCC BAA-381 / DSM 21671 / CCUG 45161 / LMG 19568 / NCTC 13146 / CH001A).